The primary structure comprises 212 residues: Orotate phosphoribosyltransferase (212 aa).

5-phospho-alpha-D-ribose 1-diphosphate contacts are provided by residues arginine 94, lysine 98, histidine 100, and 120–128; that span reads EDLISTGGS. Serine 124 provides a ligand contact to orotate.

The protein belongs to the purine/pyrimidine phosphoribosyltransferase family. PyrE subfamily. As to quaternary structure, homodimer. Requires Mg(2+) as cofactor.

It catalyses the reaction orotidine 5'-phosphate + diphosphate = orotate + 5-phospho-alpha-D-ribose 1-diphosphate. Its pathway is pyrimidine metabolism; UMP biosynthesis via de novo pathway; UMP from orotate: step 1/2. Catalyzes the transfer of a ribosyl phosphate group from 5-phosphoribose 1-diphosphate to orotate, leading to the formation of orotidine monophosphate (OMP). The chain is Orotate phosphoribosyltransferase from Bacillus pumilus (strain SAFR-032).